The primary structure comprises 196 residues: Probable thymidylate kinase (196 aa).

Position 8 to 15 (8 to 15 (GIDASGKT)) interacts with ATP.

The protein belongs to the thymidylate kinase family.

The catalysed reaction is dTMP + ATP = dTDP + ADP. This chain is Probable thymidylate kinase, found in Metallosphaera sedula (strain ATCC 51363 / DSM 5348 / JCM 9185 / NBRC 15509 / TH2).